The following is a 156-amino-acid chain: ATP synthase subunit b (156 aa).

Residues 7–29 (LLGQAISFALFVWFCMKYVWPPL) traverse the membrane as a helical segment.

This sequence belongs to the ATPase B chain family. In terms of assembly, F-type ATPases have 2 components, F(1) - the catalytic core - and F(0) - the membrane proton channel. F(1) has five subunits: alpha(3), beta(3), gamma(1), delta(1), epsilon(1). F(0) has three main subunits: a(1), b(2) and c(10-14). The alpha and beta chains form an alternating ring which encloses part of the gamma chain. F(1) is attached to F(0) by a central stalk formed by the gamma and epsilon chains, while a peripheral stalk is formed by the delta and b chains.

It localises to the cell inner membrane. Functionally, f(1)F(0) ATP synthase produces ATP from ADP in the presence of a proton or sodium gradient. F-type ATPases consist of two structural domains, F(1) containing the extramembraneous catalytic core and F(0) containing the membrane proton channel, linked together by a central stalk and a peripheral stalk. During catalysis, ATP synthesis in the catalytic domain of F(1) is coupled via a rotary mechanism of the central stalk subunits to proton translocation. In terms of biological role, component of the F(0) channel, it forms part of the peripheral stalk, linking F(1) to F(0). The protein is ATP synthase subunit b of Vibrio parahaemolyticus serotype O3:K6 (strain RIMD 2210633).